A 132-amino-acid polypeptide reads, in one-letter code: MKFIIAFFVATLAVMTVSGEDKKHDYQNEFDFLLMERIHEQIKKGELALFYLQEQINHFEEKPTKEMKDKIVAEMDTIIAMIDGVRGVLDRLMQRKDLDIFEQYNLEMAKKSGDILERDLKKEEARVKKIEV.

Immunodominant conformational IgE-binding epitope stretches follow at residues 25–53 (DYQN…FYLQ) and 102–132 (EQYN…KIEV).

Belongs to the mite group 5 allergen family. In terms of assembly, monomer. Trimer of homodimers. Oligomerizes in a concentration-dependent manner.

This Dermatophagoides pteronyssinus (European house dust mite) protein is Mite allergen Der p 5 (DERP5).